Here is a 256-residue protein sequence, read N- to C-terminus: Leucyl/phenylalanyl-tRNA--protein transferase (256 aa).

The disordered stretch occupies residues 232–256 (DGCTGASRHGPGADMRRGDMSREST). Residues 245-256 (DMRRGDMSREST) are compositionally biased toward basic and acidic residues.

This sequence belongs to the L/F-transferase family.

It is found in the cytoplasm. The catalysed reaction is N-terminal L-lysyl-[protein] + L-leucyl-tRNA(Leu) = N-terminal L-leucyl-L-lysyl-[protein] + tRNA(Leu) + H(+). The enzyme catalyses N-terminal L-arginyl-[protein] + L-leucyl-tRNA(Leu) = N-terminal L-leucyl-L-arginyl-[protein] + tRNA(Leu) + H(+). It carries out the reaction L-phenylalanyl-tRNA(Phe) + an N-terminal L-alpha-aminoacyl-[protein] = an N-terminal L-phenylalanyl-L-alpha-aminoacyl-[protein] + tRNA(Phe). Functionally, functions in the N-end rule pathway of protein degradation where it conjugates Leu, Phe and, less efficiently, Met from aminoacyl-tRNAs to the N-termini of proteins containing an N-terminal arginine or lysine. In Chromohalobacter salexigens (strain ATCC BAA-138 / DSM 3043 / CIP 106854 / NCIMB 13768 / 1H11), this protein is Leucyl/phenylalanyl-tRNA--protein transferase.